The primary structure comprises 1164 residues: DNA-directed RNA polymerase subunit beta (1164 aa).

This sequence belongs to the RNA polymerase beta chain family. The RNAP catalytic core consists of 2 alpha, 1 beta, 1 beta' and 1 omega subunit. When a sigma factor is associated with the core the holoenzyme is formed, which can initiate transcription.

The enzyme catalyses RNA(n) + a ribonucleoside 5'-triphosphate = RNA(n+1) + diphosphate. Functionally, DNA-dependent RNA polymerase catalyzes the transcription of DNA into RNA using the four ribonucleoside triphosphates as substrates. The sequence is that of DNA-directed RNA polymerase subunit beta from Saccharopolyspora erythraea (strain ATCC 11635 / DSM 40517 / JCM 4748 / NBRC 13426 / NCIMB 8594 / NRRL 2338).